Consider the following 471-residue polypeptide: 6-phosphofructo-2-kinase/fructose-2,6-bisphosphatase 1 (471 aa).

Ser-2 carries the N-acetylserine modification. The interval 2–250 (SREMGELTQT…AYYLMNIHVT (249 aa)) is 6-phosphofructo-2-kinase. A Phosphoserine; by PKA modification is found at Ser-33. ATP is bound at residue 49–57 (GLPARGKTY). The beta-D-fructose 6-phosphate site is built by Arg-82 and Arg-105. Residue Asp-131 is part of the active site. Beta-D-fructose 6-phosphate contacts are provided by Thr-133 and Arg-139. Ser-141 carries the post-translational modification Phosphoserine. Residue Cys-161 is part of the active site. 170 to 175 (NIKQVK) serves as a coordination point for ATP. Lys-175, Arg-196, and Tyr-200 together coordinate beta-D-fructose 6-phosphate. The fructose-2,6-bisphosphatase stretch occupies residues 251–471 (PRSIYLCRHG…EALDTVPAHY (221 aa)). Arg-258 contacts beta-D-fructose 2,6-bisphosphate. The active-site Tele-phosphohistidine intermediate is the His-259. Beta-D-fructose 2,6-bisphosphate-binding residues include Asn-265, Gly-271, and Arg-308. The Proton donor/acceptor role is filled by Glu-328. Residues Tyr-339, Arg-353, Lys-357, Tyr-368, Gln-394, and Arg-398 each contribute to the beta-D-fructose 2,6-bisphosphate site. 350 to 353 (FALR) contacts ATP. ATP-binding positions include 394–398 (QAVMR) and Tyr-430.

This sequence in the C-terminal section; belongs to the phosphoglycerate mutase family. In terms of assembly, homodimer. As to expression, liver.

It carries out the reaction beta-D-fructose 2,6-bisphosphate + H2O = beta-D-fructose 6-phosphate + phosphate. The enzyme catalyses beta-D-fructose 6-phosphate + ATP = beta-D-fructose 2,6-bisphosphate + ADP + H(+). Phosphorylation at Ser-33 inhibits the kinase and activates the bisphosphatase. Synthesis and degradation of fructose 2,6-bisphosphate. The sequence is that of 6-phosphofructo-2-kinase/fructose-2,6-bisphosphatase 1 from Rattus norvegicus (Rat).